A 206-amino-acid chain; its full sequence is Imidazoleglycerol-phosphate dehydratase (206 aa).

Residues 1–21 (MTTPSTAPTPAPRKAEVSRNT) are disordered.

It belongs to the imidazoleglycerol-phosphate dehydratase family.

The protein resides in the cytoplasm. It catalyses the reaction D-erythro-1-(imidazol-4-yl)glycerol 3-phosphate = 3-(imidazol-4-yl)-2-oxopropyl phosphate + H2O. Its pathway is amino-acid biosynthesis; L-histidine biosynthesis; L-histidine from 5-phospho-alpha-D-ribose 1-diphosphate: step 6/9. This Polaromonas sp. (strain JS666 / ATCC BAA-500) protein is Imidazoleglycerol-phosphate dehydratase.